The primary structure comprises 261 residues: U11/U12 small nuclear ribonucleoprotein 31 kDa protein (261 aa).

The segment at 18–51 (YYRYSSVAAPPPSNPKHQPSSSAKSSAPGGGSGG) is disordered. Residues 57–135 (STLYVSNLDF…RKLTVSIAAD (79 aa)) enclose the RRM domain. The segment at 153–169 (RCYECGDEGHLSYECPK) adopts a CCHC-type zinc-finger fold. Residues 165-261 (YECPKNQLGP…YFSDESDDED (97 aa)) form a disordered region. Residues 226–235 (AGERLRKREA) show a composition bias toward basic and acidic residues.

As to quaternary structure, component of the U11/U12 snRNPs that are part of the U12-type spliceosome. In terms of tissue distribution, ubiquitous. Abundantly expressed in the shoot apical neristem.

The protein localises to the nucleus. In terms of biological role, RNA chaperone required for proper U12 intron splicing and for normal growth and development of plants. Mainly responsible for meristem activity. Plays a role in regulating cell division. The chain is U11/U12 small nuclear ribonucleoprotein 31 kDa protein (SNRNP31) from Arabidopsis thaliana (Mouse-ear cress).